The primary structure comprises 196 residues: MDVTIQHPWFKRALGPFYPSRLFDQFFGEGLFEYDLLPFLSSTISPYYRQSLFRTVLDSGISELMTHMWFVMHQPHAGNPKNNPIKVRSDRDKFVIFLDVKHFSPEDLTVKVLEDFVEIHGKHNERQDDHGYISREFHRRYRLPSNVDQSALSCSLSADGMLTFSGPKVQSGLDAGHSERAIPVSREEKPSSAPSS.

Position 1 is an N-acetylmethionine (Met-1). The interval 1–63 (MDVTIQHPWF…RTVLDSGISE (63 aa)) is required for complex formation with BFSP1 and BFSP2. Gln-6 bears the Deamidated glutamine; partial mark. Ser-45 is subject to Phosphoserine. At Gln-50 the chain carries Deamidated glutamine; partial. One can recognise a sHSP domain in the interval 76-185 (HAGNPKNNPI…GHSERAIPVS (110 aa)). Residues Lys-93 and Lys-122 each carry the N6-acetyllysine modification. A Zn(2+)-binding site is contributed by His-123. Position 124 is a deamidated asparagine; partial (Asn-124). Residues Glu-125 and His-130 each coordinate Zn(2+). Ser-145 is subject to Phosphoserine. Asn-146 is subject to Deamidated asparagine; partial. Residues 168 to 196 (KVQSGLDAGHSERAIPVSREEKPSSAPSS) form a disordered region. Gln-170 bears the Deamidated glutamine; partial mark. A compositionally biased stretch (basic and acidic residues) spans 176–190 (GHSERAIPVSREEKP). Zn(2+) is bound at residue His-177. Ser-185 carries an O-linked (GlcNAc) serine glycan.

This sequence belongs to the small heat shock protein (HSP20) family. In terms of assembly, heteromer composed of three CRYAA and one CRYAB subunits. Inter-subunit bridging via zinc ions enhances stability, which is crucial as there is no protein turn over in the lens. Can also form homodimers and homotetramers (dimers of dimers) which serve as the building blocks of homooligomers. Within homooligomers, the zinc-binding motif is created from residues of 3 different molecules. His-123 and Glu-125 from one molecule are ligands of the zinc ion, and His-130 and His-177 residues from additional molecules complete the site with tetrahedral coordination geometry. Part of a complex required for lens intermediate filament formation composed of BFSP1, BFSP2 and CRYAA. Post-translationally, acetylation at Lys-93 may increase chaperone activity. Undergoes age-dependent proteolytical cleavage at the C-terminus.

The protein localises to the cytoplasm. Its subcellular location is the nucleus. Contributes to the transparency and refractive index of the lens. Acts as a chaperone, preventing aggregation of various proteins under a wide range of stress conditions. Required for the correct formation of lens intermediate filaments as part of a complex composed of BFSP1, BFSP2 and CRYAA. The chain is Alpha-crystallin A chain (CRYAA) from Mesocricetus auratus (Golden hamster).